Consider the following 515-residue polypeptide: MAVPEPSMPLSRGGPGSASLSPPRGDRTLLVRHLPAELTAEEKEDLLKYFGAQSVRVLSDKGRLKHTAFATFPNEKAAIKALTRLHQLKLLGHTLVVEFAKEQDRVHSSCPASNAEKKKRLDDTVENDKEKKEPDVLTVENGIAPNHGLTFPLNSCLKYMYPPPSSTILANIVNALASVPKFYVQVLHLMNKMNLPTPFGPITARPPMYEDYVQLHAPLPPTSPQPPEEPPLPDEDEDLSSKESEYESSDEEDRQRMNKLMELANFQPKRPKTVKPRHVRKKRKIKDMLTVPSPASQSLHPVLLPSDVFDQPQPVGNKKIEFNISTNVPAALNKDLETEQNNEEKNSDSPDTGLDDSNTGFGKLFPKPNVNITEEIKEDSDEMPSQFISRRELEKGRISREEMETLSVFRSYEPGEPNCRIYVKNLARHVQEKDLKFIFGRYVDFSSETQRIMFDIRLMKEGRMKGQAFVGLPNEKAAAKALKEANGYVLFGKPMVVQFARSARPKHDSKEGKRK.

A disordered region spans residues 1–26 (MAVPEPSMPLSRGGPGSASLSPPRGD). Position 21 is a phosphoserine (Ser-21). Positions 27-102 (RTLLVRHLPA…HTLVVEFAKE (76 aa)) constitute an RRM 1 domain. Disordered regions lie at residues 107 to 133 (HSSC…EKKE), 215 to 254 (LHAP…EEDR), and 337 to 369 (ETEQ…PKPN). Ser-108 is subject to Phosphoserine. Residues 115–133 (AEKKKRLDDTVENDKEKKE) are compositionally biased toward basic and acidic residues. Pro residues predominate over residues 218–230 (PLPPTSPQPPEEP). Basic and acidic residues predominate over residues 337-348 (ETEQNNEEKNSD). A Phosphoserine modification is found at Ser-349. Residues 419–502 (CRIYVKNLAR…KPMVVQFARS (84 aa)) form the RRM 2 domain.

As to quaternary structure, component of the U11/U12 snRNPs that are part of the U12-type spliceosome. Found in a complex with m(7)G-capped U12 snRNA. Interacts with PDCD7.

Its subcellular location is the nucleus. Functionally, participates in pre-mRNA U12-dependent splicing, performed by the minor spliceosome which removes U12-type introns. U12-type introns comprises less than 1% of all non-coding sequences. Binds to the 3'-stem-loop of m(7)G-capped U12 snRNA. This chain is RNA-binding region-containing protein 3 (Rnpc3), found in Rattus norvegicus (Rat).